The sequence spans 221 residues: Ribosomal RNA small subunit methyltransferase G 3 (221 aa).

Residues glycine 85, phenylalanine 90, 136-137, and arginine 150 contribute to the S-adenosyl-L-methionine site; that span reads IE.

The protein belongs to the methyltransferase superfamily. RNA methyltransferase RsmG family.

Its subcellular location is the cytoplasm. The catalysed reaction is guanosine(527) in 16S rRNA + S-adenosyl-L-methionine = N(7)-methylguanosine(527) in 16S rRNA + S-adenosyl-L-homocysteine. Its function is as follows. Specifically methylates the N7 position of guanine in position 527 of 16S rRNA. The protein is Ribosomal RNA small subunit methyltransferase G 3 of Bdellovibrio bacteriovorus (strain ATCC 15356 / DSM 50701 / NCIMB 9529 / HD100).